Reading from the N-terminus, the 290-residue chain is Purine nucleoside phosphorylase (290 aa).

68–69 provides a ligand contact to phosphate; the sequence is RN. Substrate is bound at residue Met204. Thr205 is a phosphate binding site.

This sequence belongs to the PNP/MTAP phosphorylase family. MTAP subfamily. In terms of assembly, homotrimer.

The protein resides in the cytoplasm. It localises to the nucleus. It catalyses the reaction a purine D-ribonucleoside + phosphate = a purine nucleobase + alpha-D-ribose 1-phosphate. Its pathway is purine metabolism; purine nucleoside salvage. Purine nucleoside phosphorylase involved in purine salvage. This is Purine nucleoside phosphorylase from Drosophila melanogaster (Fruit fly).